We begin with the raw amino-acid sequence, 141 residues long: Period circadian protein (141 aa).

The segment at 1-141 (EGSGGSGSSG…VTLTESLLNK (141 aa)) is disordered. Positions 11–23 (HFTTGSNVHMSSV) are enriched in polar residues. The segment covering 29–68 (GGTGGTGTGTGTGTGTGTGTGTGTGTGTGTGTGTGTGTGT) has biased composition (gly residues). 19 repeat units span residues 30–31 (GT), 33–34 (GT), 35–36 (GT), 37–38 (GT), 39–40 (GT), 41–42 (GT), 43–44 (GT), 45–46 (GT), 47–48 (GT), 49–50 (GT), 51–52 (GT), 53–54 (GT), 55–56 (GT), 57–58 (GT), 59–60 (GT), 61–62 (GT), 63–64 (GT), 65–66 (GT), and 67–68 (GT). A 32 X 2 AA approximate tandem repeats of G-T region spans residues 30–94 (GTGGTGTGTG…ANGTGTGKGT (65 aa)). The 20; approximate repeat unit spans residues 69–70 (AS). Positions 69–85 (ASGTATGTASGTATGTA) are enriched in low complexity. Copy 21 of the repeat occupies 71–72 (GT). One copy of the 22; approximate repeat lies at 73-74 (AT). Copy 23 of the repeat occupies 75–76 (GT). A 24; approximate repeat occupies 77–78 (AS). Residues 79-80 (GT) form repeat 25. A 26; approximate repeat occupies 81 to 82 (AT). The stretch at 83-84 (GT) is repeat 27. The stretch at 85 to 86 (AN) is one 28; approximate repeat. Tandem repeats lie at residues 87–88 (GT) and 89–90 (GT). A 31; approximate repeat occupies 91–92 (GK). Copy 32 of the repeat occupies 93-94 (GT). Residues 101-113 (SGSGSGTGTGTGT) show a composition bias toward gly residues. Over residues 114 to 129 (GTTTTTTTGNNSSSST) the composition is skewed to low complexity. A compositionally biased stretch (polar residues) spans 130–141 (PPVTLTESLLNK).

Forms a heterodimer with timeless (TIM); the complex then translocates into the nucleus. In terms of processing, phosphorylated with a circadian rhythmicity, probably by the double-time protein (dbt). Phosphorylation could be implicated in the stability of per monomer and in the formation of heterodimer per-tim.

Its subcellular location is the nucleus. It is found in the cytoplasm. The protein resides in the perinuclear region. Its function is as follows. Essential for biological clock functions. Determines the period length of circadian and ultradian rhythms; an increase in PER dosage leads to shortened circadian rhythms and a decrease leads to lengthened circadian rhythms. Essential for the circadian rhythmicity of locomotor activity, eclosion behavior, and for the rhythmic component of the male courtship song that originates in the thoracic nervous system. The biological cycle depends on the rhythmic formation and nuclear localization of the TIM-PER complex. Light induces the degradation of TIM, which promotes elimination of PER. Nuclear activity of the heterodimer coordinatively regulates PER and TIM transcription through a negative feedback loop. Behaves as a negative element in circadian transcriptional loop. Does not appear to bind DNA, suggesting indirect transcriptional inhibition. The chain is Period circadian protein (per) from Drosophila serrata (Fruit fly).